A 96-amino-acid polypeptide reads, in one-letter code: MSEAVWHDGEDVVLRLYIQPKASRDKIVGLHGEELKIAITAPPVDGKANAHLTKFLAKQFKVAKGLVHIEKGELGRHKQIRIESPVQIPTEIKAII.

This sequence belongs to the UPF0235 family.

The polypeptide is UPF0235 protein VIBHAR_03581 (Vibrio campbellii (strain ATCC BAA-1116)).